Reading from the N-terminus, the 521-residue chain is Maturase K (521 aa).

This sequence belongs to the intron maturase 2 family. MatK subfamily.

The protein localises to the plastid. It localises to the chloroplast. Usually encoded in the trnK tRNA gene intron. Probably assists in splicing its own and other chloroplast group II introns. The sequence is that of Maturase K from Kniphofia uvaria (Red-hot poker).